Consider the following 312-residue polypeptide: Ribonuclease HIII (312 aa).

The RNase H type-2 domain maps to 95–312; it reads MSILGSDEVG…TEKAFRLLKK (218 aa). Positions 101, 102, and 206 each coordinate a divalent metal cation.

The protein belongs to the RNase HII family. RnhC subfamily. Mn(2+) is required as a cofactor. Requires Mg(2+) as cofactor.

The protein resides in the cytoplasm. It catalyses the reaction Endonucleolytic cleavage to 5'-phosphomonoester.. Its function is as follows. Endonuclease that specifically degrades the RNA of RNA-DNA hybrids. This is Ribonuclease HIII from Bacillus mycoides (strain KBAB4) (Bacillus weihenstephanensis).